The primary structure comprises 794 residues: DNA ligase (794 aa).

The tract at residues 1–47 (MEEDLFSLAAGKQPSQQATNETAPRAGEARENAGTDHPGNAEDPAHR) is disordered. Polar residues predominate over residues 13–22 (QPSQQATNET). Residues 27–47 (GEARENAGTDHPGNAEDPAHR) show a composition bias toward basic and acidic residues. NAD(+) contacts are provided by residues 73–77 (DAEYD), 122–123 (SI), and Glu160. The N6-AMP-lysine intermediate role is filled by Lys162. NAD(+)-binding residues include Arg183, Glu219, Lys335, and Lys359. Zn(2+) contacts are provided by Cys457, Cys460, Cys475, and Cys480. Positions 717-794 (IPAGSLSGKT…EEDFYKMIGN (78 aa)) constitute a BRCT domain.

This sequence belongs to the NAD-dependent DNA ligase family. LigA subfamily. The cofactor is Mg(2+). Requires Mn(2+) as cofactor.

The catalysed reaction is NAD(+) + (deoxyribonucleotide)n-3'-hydroxyl + 5'-phospho-(deoxyribonucleotide)m = (deoxyribonucleotide)n+m + AMP + beta-nicotinamide D-nucleotide.. Its function is as follows. DNA ligase that catalyzes the formation of phosphodiester linkages between 5'-phosphoryl and 3'-hydroxyl groups in double-stranded DNA using NAD as a coenzyme and as the energy source for the reaction. It is essential for DNA replication and repair of damaged DNA. This Akkermansia muciniphila (strain ATCC BAA-835 / DSM 22959 / JCM 33894 / BCRC 81048 / CCUG 64013 / CIP 107961 / Muc) protein is DNA ligase.